We begin with the raw amino-acid sequence, 686 residues long: Heat shock 70 kDa protein 12B (686 aa).

A disordered region spans residues 12-53 (LYIGSSPERSPVPSPPGSPRTQESCGIAPLTPSQSPKPEVRA). Ser-25 and Ser-29 each carry phosphoserine. Residue Thr-42 is modified to Phosphothreonine. Ser-44, Ser-46, and Ser-276 each carry phosphoserine.

This sequence belongs to the heat shock protein 70 family. In terms of tissue distribution, highest expression in muscle and heart. Lower levels in liver and kidney.

This chain is Heat shock 70 kDa protein 12B (HSPA12B), found in Homo sapiens (Human).